Reading from the N-terminus, the 317-residue chain is HTH-type transcriptional regulator MetR (317 aa).

In terms of domain architecture, HTH lysR-type spans 1 to 59; sequence MIEVKHLKTLQALRNCGSLAAAAATLHQTQSALSHQFSDLEQRLGFRLFVRKSQPLRFT. The H-T-H motif DNA-binding region spans 19-38; the sequence is LAAAAATLHQTQSALSHQFS.

It belongs to the LysR transcriptional regulatory family.

It localises to the cytoplasm. Control of the last step in methionine biosynthesis; MetR is a positive activator of the metA, metE and metH genes. It is also a negative regulator of its own expression. The sequence is that of HTH-type transcriptional regulator MetR (metR) from Escherichia coli O157:H7.